The primary structure comprises 888 residues: Autophagy-related protein 9 (888 aa).

Positions 1-170 are disordered; that stretch reads MASNIFSRIK…PYTTPMGPQP (170 aa). Over 1 to 255 the chain is Cytoplasmic; the sequence is MASNIFSRIK…CTRKMSGLWN (255 aa). The span at 13-24 shows a compositional bias: polar residues; sequence SGGSQSFYQQLR. The span at 28-38 shows a compositional bias: acidic residues; the sequence is DPEYDPGLDEE. A compositionally biased stretch (polar residues) spans 123–143; it reads RATNPGSSRTPASVGPSSART. The helical transmembrane segment at 256–276 threads the bilayer; sequence FAIWLYTFFFIWKCVQYFVEI. At 277–422 the chain is on the lumenal side; it reads RRLTYIRDFY…RLLSQKLRQR (146 aa). The helical transmembrane segment at 423–443 threads the bilayer; that stretch reads FLFAGFLNLLFAPVVLAYVVI. Topologically, residues 444 to 511 are cytoplasmic; it reads VYFFTYYYEY…PKRITEAVAR (68 aa). An intramembrane segment occupies 512–532; that stretch reads TIAFMSGAITAILAIGSVLDS. At 533 to 544 the chain is on the cytoplasmic side; that stretch reads ELFLNFEITKDR. A helical membrane pass occupies residues 545–565; that stretch reads PVIFYLGVFAAIWATTRGMVS. Topologically, residues 566–611 are lumenal; that stretch reads EETLVFNPEYALRNVIEYTRYVPDHWKNKLHSSEVKQEFSELYKMK. A helical transmembrane segment spans residues 612 to 632; sequence VVIFLEEMMGIVTTPMLLLFS. Over 633 to 642 the chain is Cytoplasmic; the sequence is LPRCSDQIVD. The stretch at 643-663 is an intramembrane region; the sequence is FFREFTIHVDGLGYVCSFAVF. Over 664 to 888 the chain is Cytoplasmic; that stretch reads DFQKGPGNTG…QRPRRGGGMV (225 aa). Disordered stretches follow at residues 748 to 770 and 834 to 866; these read GRTG…PRIG and EPGG…DPEA.

Belongs to the ATG9 family. As to quaternary structure, homotrimer; forms a homotrimer with a central pore that forms a path between the two membrane leaflets. Phosphorylated by ATG1. ATG1 phosphorylation is required for ATG18 interaction and preautophagosome elongation.

Its subcellular location is the preautophagosomal structure membrane. The protein localises to the cytoplasmic vesicle membrane. It localises to the golgi apparatus membrane. The protein resides in the endoplasmic reticulum membrane. It carries out the reaction a 1,2-diacyl-sn-glycero-3-phosphocholine(in) = a 1,2-diacyl-sn-glycero-3-phosphocholine(out). The catalysed reaction is a 1,2-diacyl-sn-glycero-3-phospho-L-serine(in) = a 1,2-diacyl-sn-glycero-3-phospho-L-serine(out). The enzyme catalyses a 1,2-diacyl-sn-glycero-3-phosphoethanolamine(in) = a 1,2-diacyl-sn-glycero-3-phosphoethanolamine(out). It catalyses the reaction a 1,2-diacyl-sn-glycero-3-phospho-(1D-myo-inositol-3-phosphate)(in) = a 1,2-diacyl-sn-glycero-3-phospho-(1D-myo-inositol-3-phosphate)(out). Phospholipid scramblase involved in autophagy and cytoplasm to vacuole transport (Cvt) vesicle formation. Cycles between the preautophagosomal structure/phagophore assembly site (PAS) and the cytoplasmic vesicle pool and supplies membrane for the growing autophagosome. Lipid scramblase activity plays a key role in preautophagosomal structure/phagophore assembly by distributing the phospholipids that arrive through ATG2 from the cytoplasmic to the luminal leaflet of the bilayer, thereby driving autophagosomal membrane expansion. Required for mitophagy. Also involved in endoplasmic reticulum-specific autophagic process and is essential for the survival of cells subjected to severe ER stress. Different machineries are required for anterograde trafficking to the PAS during either the Cvt pathway or bulk autophagy and for retrograde trafficking. Autophagy is required for proper vegetative growth, asexual/sexual reproduction, and full virulence. Autophagy is particularly involved in the biosynthesis of deoxynivalenol (DON), an important virulence determinant. Required for aerial hyphae development and lipid droplet degradation in response to starvation. This Gibberella zeae (strain ATCC MYA-4620 / CBS 123657 / FGSC 9075 / NRRL 31084 / PH-1) (Wheat head blight fungus) protein is Autophagy-related protein 9.